Here is a 254-residue protein sequence, read N- to C-terminus: Urease accessory protein UreF (254 aa).

Basic and acidic residues predominate over residues 1–11 (MDKGKSVKSTE). The interval 1-26 (MDKGKSVKSTEKSVGMPPKTPKTDNN) is disordered.

This sequence belongs to the UreF family. As to quaternary structure, ureH, UreF and UreG form a complex that acts as a GTP-hydrolysis-dependent molecular chaperone, activating the urease apoprotein by helping to assemble the nickel containing metallocenter of UreC. The UreE protein probably delivers the nickel.

The protein localises to the cytoplasm. Required for maturation of urease via the functional incorporation of the urease nickel metallocenter. The chain is Urease accessory protein UreF from Helicobacter pylori (strain ATCC 700392 / 26695) (Campylobacter pylori).